A 380-amino-acid polypeptide reads, in one-letter code: MAPNLRKSHPLLKTINNSLIDLPTPSNISAWWNFGSLLGICLATQILTGLLLAAHYTADTTLAFSSVAHTCRNVQYGWLIRNLHANGASFFFICIYLHIGRGLYYGSYLYKETWNTGIILLLTLMATAFVGYVLPWGQMSFWGATVITNLFSAIPYIGQTLVEWAWGGFSVDNPTLTRFFTLHFLLPFMIAGLTLIHLTFLHESGSNNPLGIVANSDKIPFHPYYSTKDILGFILLLLPLTTLALFSPNLLGDPENFTPANPLVTPPHIKPEWYFLFAYAILRSIPNKLGGVLALAASVLILFLIPLLHKSKQRTMTFRPLSQLLFWTLVANLTILTWIGSQPVEHPFIIIGQLASLTYFTILLILFPLIGTLENKMLNH.

Helical transmembrane passes span 34-54, 78-99, 114-134, and 179-199; these read FGSLLGICLATQILTGLLLAA, WLIRNLHANGASFFFICIYLHI, WNTGIILLLTLMATAFVGYVL, and FFTLHFLLPFMIAGLTLIHLT. Positions 84 and 98 each coordinate heme b. Positions 183 and 197 each coordinate heme b. His-202 is a binding site for a ubiquinone. The next 4 helical transmembrane spans lie at 227–247, 289–309, 321–341, and 348–368; these read TKDILGFILLLLPLTTLALFS, LGGVLALAASVLILFLIPLLH, LSQLLFWTLVANLTILTWIGS, and FIIIGQLASLTYFTILLILFP.

The protein belongs to the cytochrome b family. As to quaternary structure, the cytochrome bc1 complex contains 11 subunits: 3 respiratory subunits (MT-CYB, CYC1 and UQCRFS1), 2 core proteins (UQCRC1 and UQCRC2) and 6 low-molecular weight proteins (UQCRH/QCR6, UQCRB/QCR7, UQCRQ/QCR8, UQCR10/QCR9, UQCR11/QCR10 and a cleavage product of UQCRFS1). This cytochrome bc1 complex then forms a dimer. Heme b is required as a cofactor.

It is found in the mitochondrion inner membrane. Functionally, component of the ubiquinol-cytochrome c reductase complex (complex III or cytochrome b-c1 complex) that is part of the mitochondrial respiratory chain. The b-c1 complex mediates electron transfer from ubiquinol to cytochrome c. Contributes to the generation of a proton gradient across the mitochondrial membrane that is then used for ATP synthesis. The polypeptide is Cytochrome b (MT-CYB) (Eudyptes chrysocome (Western rockhopper penguin)).